Here is a 771-residue protein sequence, read N- to C-terminus: Tubulin monoglycylase TTLL3 (771 aa).

Residues 70-106 (PRPSFSQPRRHDHETETTDEGDSSDEDDLGEEVERDD) are disordered. Residues 86–106 (TTDEGDSSDEDDLGEEVERDD) show a composition bias toward acidic residues. The TTL domain maps to 220 to 566 (EGEKMGEVHN…RRSERNTDTG (347 aa)). ATP contacts are provided by residues K339, 345 to 346 (RG), 377 to 380 (QKYI), 390 to 392 (KFD), and 434 to 435 (CN). A protein is bound at residue R345. S437 contacts L-glutamate. Positions 512, 525, and 527 each coordinate Mg(2+). E525 contributes to the ATP binding site. 2 disordered regions span residues 605 to 640 (LIQS…EEVK) and 682 to 713 (TELH…PTLY). A compositionally biased stretch (polar residues) spans 614-633 (SKSTNHKSSLLSSPCTSGKE).

Mg(2+) is required as a cofactor.

It localises to the cytoplasm. The protein resides in the cytoskeleton. The protein localises to the cell projection. It is found in the cilium. Its subcellular location is the cilium axoneme. It localises to the flagellum axoneme. The catalysed reaction is L-glutamyl-[protein] + glycine + ATP = glycyl-L-glutamyl-[protein] + ADP + phosphate + H(+). Its function is as follows. Monoglycylase which modifies alpha- and beta-tubulin, adding a single glycine on the gamma-carboxyl groups of specific glutamate residues to generate monoglycine side chains within the C-terminal tail of tubulin. Not involved in elongation step of the polyglycylation reaction. Preferentially glycylates a beta-tail peptide over the alpha-tail, although shifts its preference toward alpha-tail as beta-tail glutamylation increases. Competes with polyglutamylases for modification site on beta-tubulin substrate, thereby creating an anticorrelation between glycylation and glutamylation reactions. Not involved in elongation step of the polyglycylation reaction. The sequence is that of Tubulin monoglycylase TTLL3 (ttll3) from Danio rerio (Zebrafish).